Here is a 1638-residue protein sequence, read N- to C-terminus: Non-structural polyprotein 1AB (1638 aa).

Positions L130–V222 form a coiled coil. A run of 6 helical transmembrane segments spans residues V220–I240, V379–G398, A407–V427, F437–L457, A479–L499, and I507–I527. Catalysis depends on charge relay system; for serine protease activity residues H600, D632, and S697. Residues K758–Y788 adopt a coiled-coil conformation. Position 834 is an O-(5'-phospho-RNA)-tyrosine (Y834). Residues R1381 to E1515 enclose the RdRp catalytic domain.

The protein belongs to the astroviridae polyprotein 1AB family. Monomer. Post-translationally, cleaved by the viral and host proteases. The protease is probably autocatalytically cleaved.

The protein resides in the host membrane. It catalyses the reaction RNA(n) + a ribonucleoside 5'-triphosphate = RNA(n+1) + diphosphate. Functionally, responsible for the cleavage of the polyprotein into functional products. Protein covalently attached to the 5' extremity of the genomic and subgenomic RNAs. It may serve as a primer for the replicase. This chain is Non-structural polyprotein 1AB (ORF1), found in Turkey astrovirus 2 (TAstV-2).